The sequence spans 517 residues: Probable mannosyltransferase KTR7 (517 aa).

Over 1–23 (MAIRLNPKVRRFLLDKCRQKRYG) the chain is Cytoplasmic. A helical; Signal-anchor for type II membrane protein transmembrane segment spans residues 24–44 (FLFLGCIFAILYCMGTWPFFA). A stem region region spans residues 45 to 85 (KDIVHDPNNLPYSLQDYSTDKDEPFFRGCTDTKLYLQNPAY). Residues 45–517 (KDIVHDPNNL…IRRENFRVIE (473 aa)) lie on the Lumenal side of the membrane. The segment at 86–517 (SKMNASFVML…IRRENFRVIE (432 aa)) is catalytic. 2 N-linked (GlcNAc...) asparagine glycosylation sites follow: Asn89 and Asn144. Catalysis depends on Glu367, which acts as the Nucleophile.

It belongs to the glycosyltransferase 15 family.

Its subcellular location is the membrane. Possible glycosyltransferase that transfers an alpha-D-mannosyl residue from GDP-mannose into lipid-linked oligosaccharide, forming an alpha-(1-&gt;2)-D-mannosyl-D-mannose linkage. This is Probable mannosyltransferase KTR7 (KTR7) from Saccharomyces cerevisiae (strain ATCC 204508 / S288c) (Baker's yeast).